The chain runs to 245 residues: Serine/arginine-rich splicing factor 1B (245 aa).

Positions 15–90 (CRIYVGNLPP…YRLRVEFPRS (76 aa)) constitute an RRM 1 domain. Disordered stretches follow at residues 89–116 (RSGRGGGRGGGGGGGVGAPRGRYGPPSR) and 192–245 (KVDG…RSRT). Positions 91-106 (GRGGGRGGGGGGGVGA) are enriched in gly residues. An RRM 2 domain is found at 120-194 (YRVIVSGLPP…ETAYIRVKVD (75 aa)). Basic residues predominate over residues 204 to 245 (SRSRSRSRSRSRSNSRSRSYSPRRSRGSPRYSPRHSRSRSRT).

The protein belongs to the splicing factor SR family.

The protein resides in the cytoplasm. The protein localises to the nucleus speckle. Its function is as follows. May play a role in preventing exon skipping, ensuring the accuracy of splicing and regulating alternative splicing. The chain is Serine/arginine-rich splicing factor 1B (srsf1b) from Danio rerio (Zebrafish).